Reading from the N-terminus, the 273-residue chain is MENRTNFFHLHLISDSTGETLISAGRAASAQFRSAQPIEHVYPLIRNRKQLLPVLQAIDDAPGIVLYTIVDRELASLIDERCIEMGVASVNVLEPVMNAFQIYLGAPSRRRVGAQHVMNAGYFARIEALNFTMDHDDGQMPDDYNDADVVIIGISRTSKTPTSIYLANRGIKTANIPIVYGVPLPESLFVASKPLIVCLIATTDRISQVRENRVLGVTQGFDREHYTDRAAISEELKYARSLCARHNWPLIDVTRRSIEETAAAIVALRPKLR.

153-160 (GISRTSKT) is a binding site for ADP.

This sequence belongs to the pyruvate, phosphate/water dikinase regulatory protein family. PDRP subfamily.

The enzyme catalyses N(tele)-phospho-L-histidyl/L-threonyl-[pyruvate, phosphate dikinase] + ADP = N(tele)-phospho-L-histidyl/O-phospho-L-threonyl-[pyruvate, phosphate dikinase] + AMP + H(+). The catalysed reaction is N(tele)-phospho-L-histidyl/O-phospho-L-threonyl-[pyruvate, phosphate dikinase] + phosphate + H(+) = N(tele)-phospho-L-histidyl/L-threonyl-[pyruvate, phosphate dikinase] + diphosphate. Its function is as follows. Bifunctional serine/threonine kinase and phosphorylase involved in the regulation of the pyruvate, phosphate dikinase (PPDK) by catalyzing its phosphorylation/dephosphorylation. The sequence is that of Putative pyruvate, phosphate dikinase regulatory protein from Rhizobium johnstonii (strain DSM 114642 / LMG 32736 / 3841) (Rhizobium leguminosarum bv. viciae).